Reading from the N-terminus, the 424-residue chain is UDP-N-acetylglucosamine 1-carboxyvinyltransferase (424 aa).

22–23 (KN) contributes to the phosphoenolpyruvate binding site. Arg98 contributes to the UDP-N-acetyl-alpha-D-glucosamine binding site. Cys122 (proton donor) is an active-site residue. Cys122 bears the 2-(S-cysteinyl)pyruvic acid O-phosphothioketal mark. Residues 127–131 (RPVDQ), Asp312, and Ile334 each bind UDP-N-acetyl-alpha-D-glucosamine.

The protein belongs to the EPSP synthase family. MurA subfamily.

It localises to the cytoplasm. It carries out the reaction phosphoenolpyruvate + UDP-N-acetyl-alpha-D-glucosamine = UDP-N-acetyl-3-O-(1-carboxyvinyl)-alpha-D-glucosamine + phosphate. The protein operates within cell wall biogenesis; peptidoglycan biosynthesis. In terms of biological role, cell wall formation. Adds enolpyruvyl to UDP-N-acetylglucosamine. This chain is UDP-N-acetylglucosamine 1-carboxyvinyltransferase, found in Xanthomonas campestris pv. campestris (strain B100).